Here is a 200-residue protein sequence, read N- to C-terminus: LIM domain-containing protein WLIM2a (200 aa).

2 LIM zinc-binding domains span residues 8-68 and 107-167; these read QKCR…LFKE and DKCA…LFKE.

Interacts with F-actin. Expressed in roots, leaves, stems, flowers and siliques. Barely detected in pollen.

It is found in the cytoplasm. Its subcellular location is the cytoskeleton. Its function is as follows. Binds to actin filaments and promotes cross-linking into thick bundles. Has an actin-stabilizing activity. The actin regulatory activities are not regulated by pH and [Ca(2+)]. The protein is LIM domain-containing protein WLIM2a of Arabidopsis thaliana (Mouse-ear cress).